We begin with the raw amino-acid sequence, 595 residues long: Pectinesterase 5 (595 aa).

An N-terminal signal peptide occupies residues 1-24 (MIGKVVVSVASILLIVGVAIGVVA). 2 N-linked (GlcNAc...) asparagine glycosylation sites follow: Asn-86 and Asn-206. Positions 215 to 239 (SDKGAAPVNKGTPPVADDSPVADPD) are disordered. The segment covering 227–239 (PPVADDSPVADPD) has biased composition (low complexity). The short motif at 243 to 246 (RRLL) is the RRLL cleavage motif element. An RKLM cleavage motif motif is present at residues 263–266 (RKLM). Asn-349 carries an N-linked (GlcNAc...) asparagine glycan. Substrate is bound by residues Thr-360 and Gln-390. Asp-413 functions as the Proton donor in the catalytic mechanism. Asp-434 (nucleophile) is an active-site residue. 2 residues coordinate substrate: Arg-503 and Trp-505.

It in the N-terminal section; belongs to the PMEI family. In the C-terminal section; belongs to the pectinesterase family. Interacts with SBT6.1. Expressed in pollen grains and pollen tubes.

It is found in the cell membrane. Its subcellular location is the secreted. The protein localises to the cell wall. The protein resides in the golgi apparatus membrane. The enzyme catalyses [(1-&gt;4)-alpha-D-galacturonosyl methyl ester](n) + n H2O = [(1-&gt;4)-alpha-D-galacturonosyl](n) + n methanol + n H(+). It functions in the pathway glycan metabolism; pectin degradation; 2-dehydro-3-deoxy-D-gluconate from pectin: step 1/5. Functionally, acts in the modification of cell walls via demethylesterification of cell wall pectin. Plays an important role in growth of pollen tubes in female floral tissues, possibly via enhancing the interaction between the pollen tube and female floral tissues by modification of the cell walls. May be regulated by MYB80 during anther development and play a role in tapetum and pollen development. This chain is Pectinesterase 5 (PME5), found in Arabidopsis thaliana (Mouse-ear cress).